We begin with the raw amino-acid sequence, 502 residues long: Mitochondrial fusion and transport protein UGO1 (502 aa).

Met-1 is subject to N-acetylmethionine. Residues 1–293 (MNNNNVTEAT…VINSPDISKS (293 aa)) lie on the Cytoplasmic side of the membrane. The binds FZO1 stretch occupies residues 1-294 (MNNNNVTEAT…INSPDISKSF (294 aa)). Residues 288 to 383 (PDISKSFILA…NSFFNKLFDL (96 aa)) form a Solcar repeat. A helical; Signal-anchor for type II membrane protein transmembrane segment spans residues 294–314 (FILALGAGVFTSIILLPVDLI). The tract at residues 312–502 (DLIRTRLIVT…VDINMEQEKF (191 aa)) is binds MGM1. At 315–502 (RTRLIVTSFK…VDINMEQEKF (188 aa)) the chain is on the mitochondrial intermembrane side.

Interacts with FZO1 through its cytoplasmic domain and with MGM1 through its mitochondrial intermembrane space domain.

The protein resides in the mitochondrion outer membrane. Required for mitochondrial fusion as well as normal mitochondrial morphology by bridging the essential interaction between FZO1 and MGM1. May coordinate fusion of inner and outer membranes during mitochondrial fusion. This chain is Mitochondrial fusion and transport protein UGO1, found in Saccharomyces cerevisiae (strain ATCC 204508 / S288c) (Baker's yeast).